Here is a 533-residue protein sequence, read N- to C-terminus: MRLDRRALYALVLLLACASLGLLYASTRDAPGLPNPLALWSPPQGPPRLDLLDLATEPRYAHIPVRIKEQVVGLLAQNNCSCESSGGRFALPFLRQVRAIDFTKAFDAEELRAVSISREQEYQAFLARSRSLADQLLIAPANSPLQYPLQGVEVQPLRSILVPGLSLQEASVQEIYQVNLIASLGTWDVAGEVTGVTLTGEGQSDLTLASPILDKLNRQLQLVTYSSRSYQANTADTVRFSTKGHEVAFTILIRHPPNPRLYPPSSLPQGAQYNISALVTVATKTFLRYDRLRALIASIRRFYPTVTIVIADDSDKPERISDPHVEHYFMPFGKGWFAGRNLAVSQVTTKYVLWVDDDFVFTARTRLEKLVDVLERTPLDLVGGAVREISGYATTYRQLLSVEPGAPGFGNCLRQKQGFHHELAGFPNCVVTDGVVNFFLARTDKVRQVGFDPRLNRVAHLEFFLDGLGSLRVGSCSDVVVDHASKVKLPWTSKDPGAELYARYRYPGSLDQSQVAKHRLLFFKHRLQCMTAE.

The Cytoplasmic segment spans residues 1–7 (MRLDRRA). The helical; Signal-anchor for type II membrane protein transmembrane segment at 8–25 (LYALVLLLACASLGLLYA) threads the bilayer. Over 26–533 (STRDAPGLPN…KHRLQCMTAE (508 aa)) the chain is Lumenal. N-linked (GlcNAc...) asparagine glycans are attached at residues Asn79 and Asn274. Cys429 and Cys476 form a disulfide bridge.

Belongs to the glycosyltransferase 2 family. As to quaternary structure, homodimer; disulfide-linked. Strongly expressed in brain, testis, spleen, and to a lesser extent in liver.

Its subcellular location is the golgi apparatus membrane. The catalysed reaction is a ganglioside GM3 (d18:1(4E)) + UDP-N-acetyl-alpha-D-galactosamine = a ganglioside GM2 (d18:1(4E)) + UDP + H(+). The enzyme catalyses a ganglioside GD3 (d18:1(4E)) + UDP-N-acetyl-alpha-D-galactosamine = a ganglioside GD2 (d18:1(4E)) + UDP + H(+). It carries out the reaction a ganglioside GM3 + UDP-N-acetyl-alpha-D-galactosamine = a ganglioside GM2 + UDP + H(+). It catalyses the reaction a ganglioside GD3 + UDP-N-acetyl-alpha-D-galactosamine = a ganglioside GD2 + UDP + H(+). The catalysed reaction is a ganglioside GD1a + UDP-N-acetyl-alpha-D-galactosamine = a ganglioside GalNAc-GD1a + UDP + H(+). The enzyme catalyses a ganglioside GT3 (d18:1(4E)) + UDP-N-acetyl-alpha-D-galactosamine = a ganglioside GT2 (d18:1(4E)) + UDP + H(+). It carries out the reaction a beta-D-Gal-(1-&gt;4)-beta-D-Glc-(1&lt;-&gt;1)-Cer(d18:1(4E)) + UDP-N-acetyl-alpha-D-galactosamine = a ganglioside GA2 (d18:1(4E)) + UDP + H(+). It catalyses the reaction a neolactoside IV(3)-alpha-NeuGc-nLc4Cer + UDP-N-acetyl-alpha-D-galactosamine = a neolactoside IV(4)-beta-GalNAc-IV(3)-alpha-NeuGc-nLc4Cer + UDP + H(+). It participates in sphingolipid metabolism. Functionally, involved in the biosynthesis of gangliosides GM2, GD2, GT2 and GA2 from GM3, GD3, GT3 and GA3, respectively. The polypeptide is Beta-1,4 N-acetylgalactosaminyltransferase 1 (Rattus norvegicus (Rat)).